The sequence spans 573 residues: Sterol esterase 1 (573 aa).

Topologically, residues 1–12 are cytoplasmic; sequence MGVSAVLKRARN. Residues 13 to 33 lie within the membrane without spanning it; that stretch reads LLATFIVCCFMAVVLVLALAH. Residues 34 to 573 are Cytoplasmic-facing; it reads HFINEHRDTR…TELEMVAEKA (540 aa). S315 serves as the catalytic Nucleophile. Active-site charge relay system residues include D489 and H520.

It belongs to the AB hydrolase superfamily. Not N-glycosylated.

It localises to the lipid droplet. Its subcellular location is the membrane. It catalyses the reaction a sterol ester + H2O = a sterol + a fatty acid + H(+). In terms of biological role, mediates the hydrolysis of steryl esters, thereby playing a central role in lipid metabolism. Under heme-deficient conditions, it constitutes the major steryl ester hydrolase, suggesting that it plays a central role in mobilization of steryl esters under anaerobic conditions. This Saccharomyces cerevisiae (strain ATCC 204508 / S288c) (Baker's yeast) protein is Sterol esterase 1 (YEH1).